We begin with the raw amino-acid sequence, 250 residues long: Small ribosomal subunit protein uS3 (250 aa).

The region spanning 39–111 is the KH type-2 domain; that stretch reads IRTLIKNHYP…KVQINIFEVK (73 aa).

This sequence belongs to the universal ribosomal protein uS3 family. In terms of assembly, part of the 30S ribosomal subunit. Forms a tight complex with proteins S10 and S14.

Functionally, binds the lower part of the 30S subunit head. Binds mRNA in the 70S ribosome, positioning it for translation. This is Small ribosomal subunit protein uS3 from Rubus stunt phytoplasma.